The following is an 82-amino-acid chain: NAD(P)H-quinone oxidoreductase subunit O (82 aa).

This sequence belongs to the complex I NdhO subunit family. NDH-1 can be composed of about 15 different subunits; different subcomplexes with different compositions have been identified which probably have different functions.

It is found in the cellular thylakoid membrane. The catalysed reaction is a plastoquinone + NADH + (n+1) H(+)(in) = a plastoquinol + NAD(+) + n H(+)(out). It carries out the reaction a plastoquinone + NADPH + (n+1) H(+)(in) = a plastoquinol + NADP(+) + n H(+)(out). NDH-1 shuttles electrons from an unknown electron donor, via FMN and iron-sulfur (Fe-S) centers, to quinones in the respiratory and/or the photosynthetic chain. The immediate electron acceptor for the enzyme in this species is believed to be plastoquinone. Couples the redox reaction to proton translocation, and thus conserves the redox energy in a proton gradient. Cyanobacterial NDH-1 also plays a role in inorganic carbon-concentration. The polypeptide is NAD(P)H-quinone oxidoreductase subunit O (Prochlorococcus marinus (strain MIT 9211)).